Reading from the N-terminus, the 475-residue chain is Ribonuclease Y (475 aa).

The segment at 34–73 (EFERESRERRNELQRVERRLMQKEESLDKKSETLEQKDDR) is disordered. Residues 165-228 (TVTVVQLPND…EVARIALEKL (64 aa)) enclose the KH domain. The 94-residue stretch at 291–384 (VLKHAIEVSH…VTAADAISAA (94 aa)) folds into the HD domain.

It belongs to the RNase Y family.

Its function is as follows. Endoribonuclease that initiates mRNA decay. The sequence is that of Ribonuclease Y from Alkaliphilus metalliredigens (strain QYMF).